The sequence spans 461 residues: TWiK family of potassium channels protein 18 (461 aa).

The Cytoplasmic portion of the chain corresponds to 1 to 21 (MAIVAQGVSTILTTFQKTFKG). The chain crosses the membrane as a helical span at residues 22 to 42 (LLPLIILVAYTLLGAWIFWMI). Residue asparagine 88 is glycosylated (N-linked (GlcNAc...) asparagine). An intramembrane region (pore-forming) is located at residues 116-136 (FLGSIFYCMTVYTTIGYGNIV). Residues 144 to 164 (FATILYAFIGIPLTVLSLYCL) form a helical membrane-spanning segment. Topologically, residues 165–224 (GSLFAKGCKMLWRFFLKSTRVVSKDLSNKISEAADNIEEGTTAITPSAEKTENNDDDLLS) are cytoplasmic. A helical membrane pass occupies residues 225-245 (FPISGLLLITVIWVIFCAVLF). Residues 253 to 273 (FGTSLYFTLISFTTIGFGDIL) constitute an intramembrane region (pore-forming). A helical transmembrane segment spans residues 281 to 301 (PIVGVLLLIGLSLVSTVMTLI). Over 302–461 (QQQIEALASG…GNEDYLEHDI (160 aa)) the chain is Cytoplasmic. A disordered region spans residues 328–347 (REDGEVDEHVDPEEDPENNK).

Belongs to the two pore domain potassium channel (TC 1.A.1.8) family. As to expression, expressed in body wall muscle.

Its subcellular location is the membrane. Outwardly rectifying potassium channel protein; activity is sharply augmented by increase in temperature. This is TWiK family of potassium channels protein 18 (twk-18) from Caenorhabditis elegans.